The chain runs to 757 residues: RNA-directed RNA polymerase catalytic subunit (757 aa).

Positions serine 50–tyrosine 82 are disordered. Short sequence motifs (nuclear localization signal) lie at residues arginine 187–valine 195 and arginine 203–serine 216. The interval arginine 249–glutamate 256 is promoter-binding site. The RdRp catalytic domain maps to valine 286–tyrosine 483.

The protein belongs to the influenza viruses polymerase PB1 family. In terms of assembly, influenza RNA polymerase is composed of three subunits: PB1, PB2 and PA. Interacts (via N-terminus) with PA (via C-terminus). Interacts (via C-terminus) with PB2 (via N-terminus); this interaction is essential for transcription initiation. Interacts (via C-terminus) with human PKP2 (via N-terminus); the interaction competitively inhibits the interaction between the RNA polymerase subunits PB1 and PB2. In terms of processing, phosphorylated by host PRKCA.

It localises to the host nucleus. Its subcellular location is the host cytoplasm. The enzyme catalyses RNA(n) + a ribonucleoside 5'-triphosphate = RNA(n+1) + diphosphate. Functionally, RNA-dependent RNA polymerase which is responsible for replication and transcription of virus RNA segments. The transcription of viral mRNAs occurs by a unique mechanism called cap-snatching. 5' methylated caps of cellular mRNAs are cleaved after 10-13 nucleotides by PA. In turn, these short capped RNAs are used as primers by PB1 for transcription of viral mRNAs. During virus replication, PB1 initiates RNA synthesis and copy vRNA into complementary RNA (cRNA) which in turn serves as a template for the production of more vRNAs. This is RNA-directed RNA polymerase catalytic subunit from Influenza A virus (strain A/USA:Albany/12/1951 H1N1).